We begin with the raw amino-acid sequence, 254 residues long: Bowman-Birk type bran trypsin inhibitor (254 aa).

A signal peptide spans 1–22; that stretch reads MSNTTMATSTILLFLLAGLAAA. Residues 23-118 constitute a propeptide that is removed on maturation; it reads HGDGDTTIRL…KCTAALDGLS (96 aa). Repeats lie at residues 46-120, 121-187, and 188-251; these read KPWD…LSME, RPWK…LCTP, and RPWG…CKPR. Disulfide bonds link Cys51-Cys248, Cys125-Cys185, Cys126-Cys143, Cys152-Cys159, Cys156-Cys172, Cys193-Cys248, Cys194-Cys209, Cys199-Cys207, Cys216-Cys223, and Cys220-Cys236. Residues 252–254 constitute a propeptide that is removed on maturation; it reads AEN.

This sequence belongs to the Bowman-Birk serine protease inhibitor family. As to expression, expressed in roots, leaves and flowers.

In Oryza sativa subsp. indica (Rice), this protein is Bowman-Birk type bran trypsin inhibitor (RBBI3.3).